The chain runs to 355 residues: Methylthioribose-1-phosphate isomerase (355 aa).

Residues 50–52 (RGA), Arg93, and Gln198 contribute to the substrate site. The active-site Proton donor is Asp239. Residue 249-250 (NK) coordinates substrate.

Belongs to the eIF-2B alpha/beta/delta subunits family. MtnA subfamily. As to quaternary structure, homodimer.

It catalyses the reaction 5-(methylsulfanyl)-alpha-D-ribose 1-phosphate = 5-(methylsulfanyl)-D-ribulose 1-phosphate. It participates in amino-acid biosynthesis; L-methionine biosynthesis via salvage pathway; L-methionine from S-methyl-5-thio-alpha-D-ribose 1-phosphate: step 1/6. Functionally, catalyzes the interconversion of methylthioribose-1-phosphate (MTR-1-P) into methylthioribulose-1-phosphate (MTRu-1-P). This Geobacillus thermodenitrificans (strain NG80-2) protein is Methylthioribose-1-phosphate isomerase.